The sequence spans 330 residues: Pyridoxal 5'-phosphate synthase subunit PdxS (330 aa).

Asp-23 contributes to the D-ribose 5-phosphate binding site. Catalysis depends on Lys-80, which acts as the Schiff-base intermediate with D-ribose 5-phosphate. Gly-152 is a D-ribose 5-phosphate binding site. Arg-164 is a D-glyceraldehyde 3-phosphate binding site. Residues Gly-250 and 271–272 (GS) contribute to the D-ribose 5-phosphate site.

Belongs to the PdxS/SNZ family. In terms of assembly, in the presence of PdxT, forms a dodecamer of heterodimers.

It carries out the reaction aldehydo-D-ribose 5-phosphate + D-glyceraldehyde 3-phosphate + L-glutamine = pyridoxal 5'-phosphate + L-glutamate + phosphate + 3 H2O + H(+). It participates in cofactor biosynthesis; pyridoxal 5'-phosphate biosynthesis. In terms of biological role, catalyzes the formation of pyridoxal 5'-phosphate from ribose 5-phosphate (RBP), glyceraldehyde 3-phosphate (G3P) and ammonia. The ammonia is provided by the PdxT subunit. Can also use ribulose 5-phosphate and dihydroxyacetone phosphate as substrates, resulting from enzyme-catalyzed isomerization of RBP and G3P, respectively. The protein is Pyridoxal 5'-phosphate synthase subunit PdxS of Methanocaldococcus jannaschii (strain ATCC 43067 / DSM 2661 / JAL-1 / JCM 10045 / NBRC 100440) (Methanococcus jannaschii).